Consider the following 319-residue polypeptide: HPr kinase/phosphorylase (319 aa).

Residues His137 and Lys158 contribute to the active site. 152–159 contributes to the ATP binding site; it reads GDSGVGKS. Position 159 (Ser159) interacts with Mg(2+). Asp176 serves as the catalytic Proton acceptor; for phosphorylation activity. Proton donor; for dephosphorylation activity. Residues 201 to 210 are important for the catalytic mechanism of both phosphorylation and dephosphorylation; the sequence is MEIRGLGIIN. Glu202 is a Mg(2+) binding site. The active site involves Arg243. The important for the catalytic mechanism of dephosphorylation stretch occupies residues 264–269; it reads PVRPGR.

It belongs to the HPrK/P family. In terms of assembly, homohexamer. The cofactor is Mg(2+).

The catalysed reaction is [HPr protein]-L-serine + ATP = [HPr protein]-O-phospho-L-serine + ADP + H(+). It carries out the reaction [HPr protein]-O-phospho-L-serine + phosphate + H(+) = [HPr protein]-L-serine + diphosphate. Functionally, catalyzes the ATP- as well as the pyrophosphate-dependent phosphorylation of a specific serine residue in HPr, a phosphocarrier protein of the phosphoenolpyruvate-dependent sugar phosphotransferase system (PTS). HprK/P also catalyzes the pyrophosphate-producing, inorganic phosphate-dependent dephosphorylation (phosphorolysis) of seryl-phosphorylated HPr (P-Ser-HPr). The protein is HPr kinase/phosphorylase of Treponema pallidum subsp. pallidum (strain SS14).